Here is a 172-residue protein sequence, read N- to C-terminus: 6,7-dimethyl-8-ribityllumazine synthase (172 aa).

5-amino-6-(D-ribitylamino)uracil contacts are provided by residues Phe-24, 58–60, and 82–84; these read ALE and AVI. 87–88 serves as a coordination point for (2S)-2-hydroxy-3-oxobutyl phosphate; sequence ET. The active-site Proton donor is the His-90. A 5-amino-6-(D-ribitylamino)uracil-binding site is contributed by Asn-115. Arg-129 contributes to the (2S)-2-hydroxy-3-oxobutyl phosphate binding site. A disordered region spans residues 150 to 172; sequence ALEQLDGDEDDEGEGEDDEEERA. The segment covering 154-172 has biased composition (acidic residues); sequence LDGDEDDEGEGEDDEEERA.

This sequence belongs to the DMRL synthase family.

It carries out the reaction (2S)-2-hydroxy-3-oxobutyl phosphate + 5-amino-6-(D-ribitylamino)uracil = 6,7-dimethyl-8-(1-D-ribityl)lumazine + phosphate + 2 H2O + H(+). The protein operates within cofactor biosynthesis; riboflavin biosynthesis; riboflavin from 2-hydroxy-3-oxobutyl phosphate and 5-amino-6-(D-ribitylamino)uracil: step 1/2. Functionally, catalyzes the formation of 6,7-dimethyl-8-ribityllumazine by condensation of 5-amino-6-(D-ribitylamino)uracil with 3,4-dihydroxy-2-butanone 4-phosphate. This is the penultimate step in the biosynthesis of riboflavin. This chain is 6,7-dimethyl-8-ribityllumazine synthase, found in Paraburkholderia phymatum (strain DSM 17167 / CIP 108236 / LMG 21445 / STM815) (Burkholderia phymatum).